The chain runs to 415 residues: Serine--tRNA ligase (415 aa).

230–232 provides a ligand contact to L-serine; it reads TAE. Position 261 to 263 (261 to 263) interacts with ATP; it reads RKE. Position 284 (Glu-284) interacts with L-serine. 348–351 is a binding site for ATP; sequence EISS. Ser-382 serves as a coordination point for L-serine.

The protein belongs to the class-II aminoacyl-tRNA synthetase family. Type-1 seryl-tRNA synthetase subfamily. As to quaternary structure, homodimer. The tRNA molecule binds across the dimer.

Its subcellular location is the cytoplasm. The catalysed reaction is tRNA(Ser) + L-serine + ATP = L-seryl-tRNA(Ser) + AMP + diphosphate + H(+). The enzyme catalyses tRNA(Sec) + L-serine + ATP = L-seryl-tRNA(Sec) + AMP + diphosphate + H(+). Its pathway is aminoacyl-tRNA biosynthesis; selenocysteinyl-tRNA(Sec) biosynthesis; L-seryl-tRNA(Sec) from L-serine and tRNA(Sec): step 1/1. Catalyzes the attachment of serine to tRNA(Ser). Is also able to aminoacylate tRNA(Sec) with serine, to form the misacylated tRNA L-seryl-tRNA(Sec), which will be further converted into selenocysteinyl-tRNA(Sec). The sequence is that of Serine--tRNA ligase from Sulfurimonas denitrificans (strain ATCC 33889 / DSM 1251) (Thiomicrospira denitrificans (strain ATCC 33889 / DSM 1251)).